A 134-amino-acid polypeptide reads, in one-letter code: Cytochrome b5 (134 aa).

An N-acetylalanine modification is found at Ala-2. An N6-acetyllysine mark is found at Lys-7, Lys-10, and Lys-19. The Cytochrome b5 heme-binding domain maps to 9 to 85 (VKYYTLEEIQ…SKTFIIGELH (77 aa)). Heme is bound by residues His-44 and His-68. A helical transmembrane segment spans residues 109 to 131 (WWTNWVIPAISALVVSLMYHFYT).

The protein belongs to the cytochrome b5 family.

It localises to the endoplasmic reticulum membrane. Its subcellular location is the microsome membrane. The protein localises to the cytoplasm. Functionally, cytochrome b5 is a membrane-bound hemoprotein functioning as an electron carrier for several membrane-bound oxygenases. This Sus scrofa (Pig) protein is Cytochrome b5 (CYB5A).